We begin with the raw amino-acid sequence, 378 residues long: Secreted LysM effector ldpA (378 aa).

Residues 1-19 (MMKSIRFLASALALCLVDA) form the signal peptide. Over residues 118–131 (WTPPTTTTRSTSSS) the composition is skewed to low complexity. The interval 118 to 139 (WTPPTTTTRSTSSSAGNGVTTP) is disordered. One can recognise a LysM 1 domain in the interval 152 to 198 (RFYLVVSGDSCYDIAAAQGISLDNFYTWNPAVGSSCGGLWPDYYVCV). A disordered region spans residues 208–230 (TTTTTTTPTTTSTTTTTAGNGVT). LysM domains lie at 245 to 291 (KFYQ…YVCV) and 330 to 376 (KFYL…YVCV).

Belongs to the secreted LysM effector family.

The protein resides in the secreted. It is found in the cell wall. It localises to the extracellular space. The protein localises to the extracellular matrix. Functionally, cell wall chitin of A.fumigatus recruits lung eosinophils during infection and ldpA might have a role in sequestration of chitin and act as triggers of host immunity to dampen host defense. The polypeptide is Secreted LysM effector ldpA (Aspergillus fumigatus (strain ATCC MYA-4609 / CBS 101355 / FGSC A1100 / Af293) (Neosartorya fumigata)).